Here is a 270-residue protein sequence, read N- to C-terminus: NAD(P)H-hydrate epimerase (270 aa).

The YjeF N-terminal domain maps to 25 to 234; sequence FQQLMDLMQN…DLLAPEAIYQ (210 aa). 73–77 provides a ligand contact to (6S)-NADPHX; sequence DNGGQ. K(+)-binding residues include Asn74 and Asp144. (6S)-NADPHX is bound by residues 148–154 and Glu177; that span reads GVGLYGH. Thr180 contributes to the K(+) binding site.

The protein belongs to the NnrE/AIBP family. Requires K(+) as cofactor.

It carries out the reaction (6R)-NADHX = (6S)-NADHX. It catalyses the reaction (6R)-NADPHX = (6S)-NADPHX. Functionally, catalyzes the epimerization of the S- and R-forms of NAD(P)HX, a damaged form of NAD(P)H that is a result of enzymatic or heat-dependent hydration. This is a prerequisite for the S-specific NAD(P)H-hydrate dehydratase to allow the repair of both epimers of NAD(P)HX. This Legionella pneumophila (strain Corby) protein is NAD(P)H-hydrate epimerase.